Consider the following 156-residue polypeptide: Lipoprotein signal peptidase (156 aa).

3 helical membrane passes run 5–25, 63–83, and 90–110; these read FFVV…TKQW, IEWQ…AIIA, and SNPY…GNLI. Residues aspartate 120 and aspartate 138 contribute to the active site. A helical transmembrane segment spans residues 133–153; it reads AFNVADMGICVGAFFVCLAVY.

Belongs to the peptidase A8 family.

It is found in the cell inner membrane. It carries out the reaction Release of signal peptides from bacterial membrane prolipoproteins. Hydrolyzes -Xaa-Yaa-Zaa-|-(S,diacylglyceryl)Cys-, in which Xaa is hydrophobic (preferably Leu), and Yaa (Ala or Ser) and Zaa (Gly or Ala) have small, neutral side chains.. It functions in the pathway protein modification; lipoprotein biosynthesis (signal peptide cleavage). This protein specifically catalyzes the removal of signal peptides from prolipoproteins. This Oleidesulfovibrio alaskensis (strain ATCC BAA-1058 / DSM 17464 / G20) (Desulfovibrio alaskensis) protein is Lipoprotein signal peptidase.